The following is a 338-amino-acid chain: Anthocyanidin reductase ((2S)-flavan-3-ol-forming) (338 aa).

Residues 18–21, K48, 87–90, and Y168 each bind NADP(+); these read TGFV and VATP.

It belongs to the NAD(P)-dependent epimerase/dehydratase family. Dihydroflavonol-4-reductase subfamily. In terms of tissue distribution, expressed in seeds, grape skins, flowers and leaves.

It catalyses the reaction a (2S,3R)-flavan-3-ol + 2 NADP(+) = an anthocyanidin with a 3-hydroxy group + 2 NADPH + 2 H(+). The catalysed reaction is a (2S,3S)-flavan-3-ol + 2 NADP(+) = an anthocyanidin with a 3-hydroxy group + 2 NADPH + 2 H(+). The protein operates within secondary metabolite biosynthesis; flavonoid biosynthesis. With respect to regulation, inhibited at NaCl concentrations higher than 200 mM. Its function is as follows. Produces the terminal flavan-3-ol monomers required for the formation of proanthocyanidins or condensed tannins in leaves and flowers, as well as in the skin and seeds of developing berries. Behaves as a reductase and as a C-3 epimerase. Catalyzes the double reduction of anthocyanidins, producing a mixture of (2S,3S)- and (2S,3R)-flavan-3-ols. The enzyme catalyzes sequential hydride transfers to C-2 and C-4, respectively and epimerization at C-3 is achieved by tautomerization that occurs between the two hydride transfers. Converts cyanidin, pelargonidin and delphinidin into catechin and epicatechin, afzelechin and epiafzelechin, and gallocatechin and epigallocatechin respectively. The sequence is that of Anthocyanidin reductase ((2S)-flavan-3-ol-forming) from Vitis vinifera (Grape).